The chain runs to 892 residues: Putative leucine-rich repeat receptor-like serine/threonine-protein kinase At2g04300 (892 aa).

The signal sequence occupies residues 1-26 (MKTHPQAILLCVLFFITFGLLHVVEA). The Extracellular portion of the chain corresponds to 27–523 (GNQEGFISLD…GAKKKNVVVL (497 aa)). Residues Asn-99, Asn-186, Asn-241, Asn-267, and Asn-294 are each glycosylated (N-linked (GlcNAc...) asparagine). 4 LRR repeats span residues 375–396 (IKNI…PCVP), 399–422 (FMWD…FLNL), 423–444 (SSSH…LQNL), and 447–467 (SNNN…SLLV). 5 N-linked (GlcNAc...) asparagine glycosylation sites follow: Asn-407, Asn-421, Asn-437, Asn-450, and Asn-469. Residues 524–544 (VVVSIALVVVLGSALALFLVF) traverse the membrane as a helical segment. The Cytoplasmic portion of the chain corresponds to 545–892 (RKRKTPRNEV…FGTEYTPEAR (348 aa)). The residue at position 573 (Thr-573) is a Phosphothreonine. In terms of domain architecture, Protein kinase spans 582–855 (NNFEKILGKG…QVVIELNECL (274 aa)). Residues 588-596 (LGKGGFGMV) and Lys-610 each bind ATP. Tyr-655 carries the phosphotyrosine modification. Asp-707 acts as the Proton acceptor in catalysis. 2 positions are modified to phosphothreonine: Thr-742 and Thr-747. Tyr-755 carries the post-translational modification Phosphotyrosine.

This sequence belongs to the protein kinase superfamily. Ser/Thr protein kinase family.

It is found in the cell membrane. The enzyme catalyses L-seryl-[protein] + ATP = O-phospho-L-seryl-[protein] + ADP + H(+). The catalysed reaction is L-threonyl-[protein] + ATP = O-phospho-L-threonyl-[protein] + ADP + H(+). This Arabidopsis thaliana (Mouse-ear cress) protein is Putative leucine-rich repeat receptor-like serine/threonine-protein kinase At2g04300.